Consider the following 525-residue polypeptide: GMP synthase [glutamine-hydrolyzing] (525 aa).

The Glutamine amidotransferase type-1 domain maps to 8–207 (KILILDFGSQ…ALDICQCDAN (200 aa)). The Nucleophile role is filled by Cys-85. Active-site residues include His-181 and Glu-183. The GMPS ATP-PPase domain maps to 208-400 (WKPASIIEDA…LGLPYDMLYR (193 aa)). Position 235 to 241 (235 to 241 (SGGVDSS)) interacts with ATP.

Homodimer.

The catalysed reaction is XMP + L-glutamine + ATP + H2O = GMP + L-glutamate + AMP + diphosphate + 2 H(+). Its pathway is purine metabolism; GMP biosynthesis; GMP from XMP (L-Gln route): step 1/1. In terms of biological role, catalyzes the synthesis of GMP from XMP. In Shewanella woodyi (strain ATCC 51908 / MS32), this protein is GMP synthase [glutamine-hydrolyzing].